A 412-amino-acid chain; its full sequence is Protein MITOFERRINLIKE 1, chloroplastic (412 aa).

The transit peptide at Met-1–Lys-92 directs the protein to the chloroplast. Residues Val-43–Pro-83 are disordered. Solcar repeat units lie at residues Glu-112–Leu-198, Pro-206–Ala-288, and Leu-298–Thr-392. Helical transmembrane passes span Ile-115–Leu-135, Ile-167–Val-187, Val-208–Pro-228, Ala-262–Phe-282, Ser-303–Val-323, and Thr-365–Ala-385.

It belongs to the mitochondrial carrier (TC 2.A.29) family. Expressed in leaves, developing flowers and siliques.

The protein localises to the plastid. The protein resides in the chloroplast inner membrane. Functionally, probably involved in iron transport into chloroplasts. The protein is Protein MITOFERRINLIKE 1, chloroplastic (MFL1) of Arabidopsis thaliana (Mouse-ear cress).